We begin with the raw amino-acid sequence, 377 residues long: MQSSLPLCREFFEKITAYLDYHDFRLTITANQPSITLPYYVDEKAHSIELIIFKTTFLSLFQEAHTYFNKTFSDQSGISNENIYYMTVGFLLTTPENKTVYNVHEDLLKRYFQDNSVLVIPDLLVKEVRLIQRLLCSSNNRINKSSSLWILYRKLFVLSLDANTLVLPDILFVFHSSGSQHFSNYYCWNTARWFYDNLPYNKRIELFNLTKRFCFQNVKDCSSWSALAYMVCQQEEKKTDNIRDFQRLTSSFNVPFKINKVDLNFQVQPADAFTQELVKWIDRTYAADWPPYLCLLQITKFNITLRIEMDSVLLTWRNEILNFEENSGHIKMINNTPIVPEKFSNDLLTSVNFAHFGYKKLFLNKFLDKNKKEQSDS.

In terms of biological role, may be involved in cell wall organization and biogenesis. In Saccharomyces cerevisiae (strain ATCC 204508 / S288c) (Baker's yeast), this protein is Protein ECM9 (ECM9).